The primary structure comprises 70 residues: MFCHVDVKISSKRYTWTKLPLNVPKLVLIYLQSHFVLFFFSMCQSIWERPAIGRATTSSASWMVGYDCLL.

At 1–20 (MFCHVDVKISSKRYTWTKLP) the chain is on the cytoplasmic side. Residues 21–43 (LNVPKLVLIYLQSHFVLFFFSMC) form a helical membrane-spanning segment. The Extracellular segment spans residues 44-70 (QSIWERPAIGRATTSSASWMVGYDCLL).

In terms of tissue distribution, highly expressed in B-cell lymphoma and lung cancer.

It localises to the membrane. This is Putative microRNA 17 host gene protein (MIR17HG) from Homo sapiens (Human).